The primary structure comprises 466 residues: Ribulose bisphosphate carboxylase large chain (466 aa).

Position 5 is an N6,N6,N6-trimethyllysine (K5). The substrate site is built by N114 and T164. The Proton acceptor role is filled by K166. K168 serves as a coordination point for substrate. Residues K192, D194, and E195 each coordinate Mg(2+). Residue K192 is modified to N6-carboxylysine. H285 acts as the Proton acceptor in catalysis. Residues R286, H318, and S370 each coordinate substrate.

Belongs to the RuBisCO large chain family. Type I subfamily. As to quaternary structure, heterohexadecamer of 8 large chains and 8 small chains; disulfide-linked. The disulfide link is formed within the large subunit homodimers. Mg(2+) serves as cofactor. In terms of processing, the disulfide bond which can form in the large chain dimeric partners within the hexadecamer appears to be associated with oxidative stress and protein turnover.

It localises to the plastid. The protein resides in the chloroplast. It carries out the reaction 2 (2R)-3-phosphoglycerate + 2 H(+) = D-ribulose 1,5-bisphosphate + CO2 + H2O. The catalysed reaction is D-ribulose 1,5-bisphosphate + O2 = 2-phosphoglycolate + (2R)-3-phosphoglycerate + 2 H(+). Functionally, ruBisCO catalyzes two reactions: the carboxylation of D-ribulose 1,5-bisphosphate, the primary event in carbon dioxide fixation, as well as the oxidative fragmentation of the pentose substrate in the photorespiration process. Both reactions occur simultaneously and in competition at the same active site. The protein is Ribulose bisphosphate carboxylase large chain of Poliothyrsis sinensis (Chinese pearlbloom tree).